Reading from the N-terminus, the 838-residue chain is Leucine--tRNA ligase (838 aa).

The 'HIGH' region signature appears at 36–46 (PYPSGKIHMGH). The 'KMSKS' region motif lies at 611 to 615 (KMSKS). Lysine 614 contributes to the ATP binding site.

Belongs to the class-I aminoacyl-tRNA synthetase family.

It is found in the cytoplasm. It carries out the reaction tRNA(Leu) + L-leucine + ATP = L-leucyl-tRNA(Leu) + AMP + diphosphate. This chain is Leucine--tRNA ligase, found in Wolbachia pipientis wMel.